The primary structure comprises 542 residues: MTRYIFVTGGVVSSLGKGIASASLAAILEARGLKITMLKLDPYINVDPGTMSPFQHGEVFVTQDGAETDLDLGHYERFVRTTMTQNNNFTTGRVYMDVLRKERRGDYLGATVQVIPHITDEIKRRIIKGAGDADVALVEIGGTVGDIESQPFLEAIRQLRVEIGAKRAMLMHLTLVPYIATAGETKTKPTQHSVKELRSIGLQPDVLVCRSDHPIDVSSRRKIALFTNVEERAVIALEDVDTIYRIPSVLHAQGLDDIVVERFGLECGQADLSEWDRVVDAKLNPEREVTIAMVGKYMELLDAYKSLIEAMTHAGIQSRTKVNLRYIDSEDIEQQGTSLLEGVDAILVPGGFGLRGVEGKISTVQYARENKIPYLGICLGMQVAVIEYARNVLGWSDANSTEFDKSSGHPVVGLITEWQDATGATEIRTEASDLGGTMRLGAQECQLQTGTLVHDCYAKDVIVERHRHRYEVNNNLLPQLEQAGLKISGRSGDGALVEVVEAPEHPWFVACQFHPEFTSTPRDGHPLFSGFVNAALKYSGKA.

Positions 1–265 (MTRYIFVTGG…DDIVVERFGL (265 aa)) are amidoligase domain. Residue serine 13 coordinates CTP. Serine 13 is a UTP binding site. ATP-binding positions include 14-19 (SLGKGI) and aspartate 71. Aspartate 71 and glutamate 139 together coordinate Mg(2+). CTP contacts are provided by residues 146 to 148 (DIE), 186 to 191 (KTKPTQ), and lysine 222. UTP is bound by residues 186–191 (KTKPTQ) and lysine 222. The 252-residue stretch at 290–541 (TIAMVGKYME…VNAALKYSGK (252 aa)) folds into the Glutamine amidotransferase type-1 domain. Glycine 351 contributes to the L-glutamine binding site. Cysteine 378 functions as the Nucleophile; for glutamine hydrolysis in the catalytic mechanism. L-glutamine-binding positions include 379–382 (LGMQ), glutamate 402, and arginine 469. Catalysis depends on residues histidine 514 and glutamate 516.

This sequence belongs to the CTP synthase family. As to quaternary structure, homotetramer.

The enzyme catalyses UTP + L-glutamine + ATP + H2O = CTP + L-glutamate + ADP + phosphate + 2 H(+). The catalysed reaction is L-glutamine + H2O = L-glutamate + NH4(+). It carries out the reaction UTP + NH4(+) + ATP = CTP + ADP + phosphate + 2 H(+). It participates in pyrimidine metabolism; CTP biosynthesis via de novo pathway; CTP from UDP: step 2/2. Its activity is regulated as follows. Allosterically activated by GTP, when glutamine is the substrate; GTP has no effect on the reaction when ammonia is the substrate. The allosteric effector GTP functions by stabilizing the protein conformation that binds the tetrahedral intermediate(s) formed during glutamine hydrolysis. Inhibited by the product CTP, via allosteric rather than competitive inhibition. Its function is as follows. Catalyzes the ATP-dependent amination of UTP to CTP with either L-glutamine or ammonia as the source of nitrogen. Regulates intracellular CTP levels through interactions with the four ribonucleotide triphosphates. The chain is CTP synthase from Pseudomonas aeruginosa (strain LESB58).